The following is a 356-amino-acid chain: Ubiquitin-conjugating enzyme E2 Z (356 aa).

A compositionally biased stretch (low complexity) spans 1–16; sequence MAESPTEEAATATAGA. The tract at residues 1–22 is disordered; sequence MAESPTEEAATATAGAGAAGPG. The UBC core domain maps to 101-255; the sequence is QCLLRIKRDI…IRHETIRVAV (155 aa). Cys-190 acts as the Glycyl thioester intermediate in catalysis. The tract at residues 334–356 is disordered; that stretch reads NAEMDSDSSSSGTETDLHGSLRV. Ser-339 is subject to Phosphoserine.

The protein belongs to the ubiquitin-conjugating enzyme family.

It is found in the cytoplasm. The protein resides in the nucleus. It catalyses the reaction S-ubiquitinyl-[E1 ubiquitin-activating enzyme]-L-cysteine + [E2 ubiquitin-conjugating enzyme]-L-cysteine = [E1 ubiquitin-activating enzyme]-L-cysteine + S-ubiquitinyl-[E2 ubiquitin-conjugating enzyme]-L-cysteine.. It participates in protein modification; protein ubiquitination. Its function is as follows. Catalyzes the covalent attachment of ubiquitin to other proteins. Specific substrate for UBA6, not charged with ubiquitin by UBE1. May be involved in apoptosis regulation. This chain is Ubiquitin-conjugating enzyme E2 Z (Ube2z), found in Rattus norvegicus (Rat).